We begin with the raw amino-acid sequence, 379 residues long: UDP-4-amino-4-deoxy-L-arabinose--oxoglutarate aminotransferase (379 aa).

An N6-(pyridoxal phosphate)lysine modification is found at lysine 182.

It belongs to the DegT/DnrJ/EryC1 family. ArnB subfamily. As to quaternary structure, homodimer. Pyridoxal 5'-phosphate serves as cofactor.

It catalyses the reaction UDP-4-amino-4-deoxy-beta-L-arabinose + 2-oxoglutarate = UDP-beta-L-threo-pentopyranos-4-ulose + L-glutamate. It participates in nucleotide-sugar biosynthesis; UDP-4-deoxy-4-formamido-beta-L-arabinose biosynthesis; UDP-4-deoxy-4-formamido-beta-L-arabinose from UDP-alpha-D-glucuronate: step 2/3. The protein operates within bacterial outer membrane biogenesis; lipopolysaccharide biosynthesis. In terms of biological role, catalyzes the conversion of UDP-4-keto-arabinose (UDP-Ara4O) to UDP-4-amino-4-deoxy-L-arabinose (UDP-L-Ara4N). The modified arabinose is attached to lipid A and is required for resistance to polymyxin and cationic antimicrobial peptides. This is UDP-4-amino-4-deoxy-L-arabinose--oxoglutarate aminotransferase from Klebsiella pneumoniae (strain 342).